The chain runs to 584 residues: 2-isopropylmalate synthase (584 aa).

The region spanning 40–314 (PRWCAVDLRD…DPQIDFSDIE (275 aa)) is the Pyruvate carboxyltransferase domain. Residues D49, H253, H255, and N289 each contribute to the Mg(2+) site. A regulatory domain region spans residues 456 to 584 (SRDGSGSTWG…VRDAQEAAQD (129 aa)).

Belongs to the alpha-IPM synthase/homocitrate synthase family. LeuA type 2 subfamily. Homodimer. It depends on Mg(2+) as a cofactor.

The protein localises to the cytoplasm. The enzyme catalyses 3-methyl-2-oxobutanoate + acetyl-CoA + H2O = (2S)-2-isopropylmalate + CoA + H(+). The protein operates within amino-acid biosynthesis; L-leucine biosynthesis; L-leucine from 3-methyl-2-oxobutanoate: step 1/4. Catalyzes the condensation of the acetyl group of acetyl-CoA with 3-methyl-2-oxobutanoate (2-ketoisovalerate) to form 3-carboxy-3-hydroxy-4-methylpentanoate (2-isopropylmalate). This chain is 2-isopropylmalate synthase, found in Kocuria rhizophila (strain ATCC 9341 / DSM 348 / NBRC 103217 / DC2201).